The primary structure comprises 125 residues: Large ribosomal subunit protein bL12 (125 aa).

It belongs to the bacterial ribosomal protein bL12 family. In terms of assembly, homodimer. Part of the ribosomal stalk of the 50S ribosomal subunit. Forms a multimeric L10(L12)X complex, where L10 forms an elongated spine to which 2 to 4 L12 dimers bind in a sequential fashion. Binds GTP-bound translation factors.

Forms part of the ribosomal stalk which helps the ribosome interact with GTP-bound translation factors. Is thus essential for accurate translation. The protein is Large ribosomal subunit protein bL12 of Porphyromonas gingivalis (strain ATCC 33277 / DSM 20709 / CIP 103683 / JCM 12257 / NCTC 11834 / 2561).